The chain runs to 50 residues: Protein HokA (50 aa).

Residues 7-24 (LLSLIVICFTLLFFTWMI) traverse the membrane as a helical segment.

This sequence belongs to the Hok/Gef family.

It is found in the cell inner membrane. Toxic component of a type I toxin-antitoxin (TA) system. When overexpressed kills cells within minutes; causes collapse of the transmembrane potential and arrest of respiration. Its toxic effect is probably neutralized by antisense antitoxin RNA SokA. This chain is Protein HokA, found in Escherichia coli (strain K12).